A 262-amino-acid polypeptide reads, in one-letter code: Putative ankyrin repeat protein R848 (262 aa).

ANK repeat units follow at residues 8–37, 38–67, 68–97, 99–127, 128–157, 159–187, and 189–217; these read SNDY…NVTH, DNNY…DIRD, CRDY…NIRA, DDYA…NFRA, DNDY…DIRA, DDYA…DFRS, and NNAS…DVNT.

This chain is Putative ankyrin repeat protein R848, found in Acanthamoeba polyphaga (Amoeba).